Here is a 290-residue protein sequence, read N- to C-terminus: Protein SET (290 aa).

The interval 1 to 45 (MAPKRQSPLPPQKKKPRPPPALGPEETSASAGLPKKGEKEQQEAI) is disordered. The residue at position 2 (alanine 2) is a N,N,N-trimethylalanine. Residue serine 7 is modified to Phosphoserine. Proline 11 bears the N6-acetyllysine mark. Phosphoserine is present on residues lysine 15, proline 24, and serine 28. Residues 31–78 (AGLPKKGEKEQQEAIEHIDEVQNEIDRLNEQASEEILKVEQKYNKLRQ) form a dimerization region. The segment covering 35–45 (KKGEKEQQEAI) has biased composition (basic and acidic residues). At serine 63 the chain carries Phosphoserine. Lysine 68 carries the post-translational modification N6-acetyllysine. The segment at 79-225 (PFFQKRSELI…ELGEVIKDDI (147 aa)) is earmuff domain. A Phosphotyrosine modification is found at tyrosine 146. Residue lysine 150 is modified to N6-acetyllysine. Lysine 154 is covalently cross-linked (Glycyl lysine isopeptide (Lys-Gly) (interchain with G-Cter in ubiquitin)). Disordered stretches follow at residues 158-207 (LNES…TWFT) and 236-290 (PDMD…GEDD). Over residues 169–181 (TEIKWKSGKDLTK) the composition is skewed to basic and acidic residues. The residue at position 172 (lysine 172) is an N6-acetyllysine. The span at 237–290 (DMDDEEGEGEEDDDDDEEEEGLEDIDEEGDEDEGEEDEDDDEGEEGEEDEGEDD) shows a compositional bias: acidic residues.

Belongs to the nucleosome assembly protein (NAP) family. As to quaternary structure, headphone-shaped homodimer. Isoforms 1 and 2 interact directly with each other and with ANP32A within the tripartite INHAT (inhibitor of acetyltransferases) complex. Isoform 1 and isoform 2 interact also with histones. Isoform 2 is a component of the SET complex, composed of at least ANP32A, APEX1, HMGB2, NME1, SET and TREX1, but not NME2 or TREX2. Within this complex, directly interacts with ANP32A, NME1, HMGB2 and TREX1; the interaction with ANP32A is enhanced after cleavage. Interacts with APBB1, CHTOP, SETBP1, SGO1. In terms of assembly, (Microbial infection) Interacts with herpes simplex virus 1 VP22. In terms of processing, isoform 2 is phosphorylated on Ser-15 and Ser-24. Post-translationally, isoform 2 is acetylated on Lys-11. Some glutamate residues are glycylated by TTLL8. This modification occurs exclusively on glutamate residues and results in a glycine chain on the gamma-carboxyl group. In terms of processing, N-terminus of isoform 1 is methylated by METTL11A/NTM1. Mainly trimethylated. Post-translationally, cleaved after Lys-176 by GZMA. The cleavage inhibits its nucleosome assembly activity and disrupts the inhibition on NME1. In terms of tissue distribution, widely expressed. Low levels in quiescent cells during serum starvation, contact inhibition or differentiation. Highly expressed in Wilms' tumor.

The protein resides in the cytoplasm. It is found in the cytosol. Its subcellular location is the endoplasmic reticulum. The protein localises to the nucleus. It localises to the nucleoplasm. Multitasking protein, involved in apoptosis, transcription, nucleosome assembly and histone chaperoning. Isoform 2 anti-apoptotic activity is mediated by inhibition of the GZMA-activated DNase, NME1. In the course of cytotoxic T-lymphocyte (CTL)-induced apoptosis, GZMA cleaves SET, disrupting its binding to NME1 and releasing NME1 inhibition. Isoform 1 and isoform 2 are potent inhibitors of protein phosphatase 2A. Isoform 1 and isoform 2 inhibit EP300/CREBBP and PCAF-mediated acetylation of histones (HAT) and nucleosomes, most probably by masking the accessibility of lysines of histones to the acetylases. The predominant target for inhibition is histone H4. HAT inhibition leads to silencing of HAT-dependent transcription and prevents active demethylation of DNA. Both isoforms stimulate DNA replication of the adenovirus genome complexed with viral core proteins; however, isoform 2 specific activity is higher. The sequence is that of Protein SET (SET) from Homo sapiens (Human).